The sequence spans 143 residues: Putative pre-16S rRNA nuclease (143 aa).

This sequence belongs to the YqgF nuclease family.

It is found in the cytoplasm. Functionally, could be a nuclease involved in processing of the 5'-end of pre-16S rRNA. In Mesomycoplasma hyopneumoniae (strain 232) (Mycoplasma hyopneumoniae), this protein is Putative pre-16S rRNA nuclease.